Reading from the N-terminus, the 614-residue chain is Sodium- and chloride-dependent betaine transporter (614 aa).

Positions M1–V33 are disordered. The Cytoplasmic segment spans residues M1–E44. A compositionally biased stretch (basic and acidic residues) spans E21–V33. The next 3 helical transmembrane spans lie at F45–L65, A73–L92, and G117–L137. Residues A138–R210 lie on the Extracellular side of the membrane. A disulfide bridge links C157 with C166. N-linked (GlcNAc...) asparagine glycosylation is found at N171 and N183. 9 helical membrane-spanning segments follow: residues W211 to W229, V238 to I255, I291 to Y308, I320 to L341, M374 to L393, L423 to T441, G458 to A478, I499 to S518, and I538 to I556. Over T557 to L614 the chain is Cytoplasmic. The interval G591–L614 is disordered.

Belongs to the sodium:neurotransmitter symporter (SNF) (TC 2.A.22) family. SLC6A12 subfamily. Interacts with LIN7C. Kidney.

The protein resides in the basolateral cell membrane. The protein localises to the cell membrane. The catalysed reaction is 4-aminobutanoate(out) + chloride(out) + 3 Na(+)(out) = 4-aminobutanoate(in) + chloride(in) + 3 Na(+)(in). The enzyme catalyses glycine betaine(out) + 2 chloride(out) + 3 Na(+)(out) = glycine betaine(in) + 2 chloride(in) + 3 Na(+)(in). Functionally, transporter that mediates cellular uptake of betaine and GABA in a sodium- and chloride-dependent process. May have a role in regulation of GABAergic transmission in the brain through the reuptake of GABA into presynaptic terminals, as well as in osmotic regulation. Probably also involved in renal and hepatic osmotic regulation. This chain is Sodium- and chloride-dependent betaine transporter (SLC6A12), found in Canis lupus familiaris (Dog).